We begin with the raw amino-acid sequence, 838 residues long: Collagen alpha-2(I) chain (838 aa).

The interval 1-838 (GPMGIMGPRG…GTVGPAGIRS (838 aa)) is disordered. Positions 11-38 (FQGPAGEPGEPGQTGPAGARGPAGPPGK) are enriched in low complexity. Residues 39 to 53 (AGEDGHPGKPGRPGE) are compositionally biased toward basic and acidic residues. 4 stretches are compositionally biased toward low complexity: residues 101–122 (SRGS…SAGP), 137–147 (PVGNTGPAGPA), 215–236 (NGES…RGIP), and 329–344 (AGNR…NGAQ). A compositionally biased stretch (gly residues) spans 351–360 (GVQGGKGEQG). 2 stretches are compositionally biased toward low complexity: residues 407–424 (PGES…SRGP) and 436–446 (EPGVVGAPGTA). Positions 447–456 (GPAGSGGIPG) are enriched in gly residues. Composition is skewed to low complexity over residues 479-523 (VGTT…PRGT), 530-550 (VGPA…QPGA), and 568-581 (SAGP…PGPA). Residues 582–591 (GSRGDGGPPG) show a composition bias toward gly residues. A compositionally biased stretch (low complexity) spans 593-602 (TGFPGAAGRT). The span at 633-642 (GETGAGGPPG) shows a compositional bias: gly residues. A compositionally biased stretch (low complexity) spans 649 to 689 (TAGPQGIIGAPGIIGIPGSRGIPGVSGSVGEPGPIGISGPP). The span at 693–702 (GPSGGVGNPG) shows a compositional bias: gly residues. 3 stretches are compositionally biased toward low complexity: residues 703–718 (VNGA…NPGN), 736–758 (YAGN…VGPA), and 766–781 (EPGP…AIGP).

The protein belongs to the fibrillar collagen family. In terms of assembly, trimers of one alpha 2(I) and two alpha 1(I) chains. Interacts (via C-terminus) with TMEM131 (via PapD-L domain); the interaction is direct and is involved in assembly and TRAPPIII ER-to-Golgi transport complex-dependent secretion of collagen. In terms of processing, prolines at the third position of the tripeptide repeating unit (G-X-Y) are hydroxylated in some or all of the chains. In terms of tissue distribution, forms the fibrils of tendon, ligaments and bones. In bones, the fibrils are mineralized with calcium hydroxyapatite.

It is found in the secreted. It localises to the extracellular space. The protein resides in the extracellular matrix. Functionally, type I collagen is a member of group I collagen (fibrillar forming collagen). This chain is Collagen alpha-2(I) chain, found in Cyclopes didactylus (Silky anteater).